Here is a 269-residue protein sequence, read N- to C-terminus: Putative pyruvate, phosphate dikinase regulatory protein (269 aa).

Position 147–154 (glycine 147–threonine 154) interacts with ADP.

It belongs to the pyruvate, phosphate/water dikinase regulatory protein family. PDRP subfamily.

It carries out the reaction N(tele)-phospho-L-histidyl/L-threonyl-[pyruvate, phosphate dikinase] + ADP = N(tele)-phospho-L-histidyl/O-phospho-L-threonyl-[pyruvate, phosphate dikinase] + AMP + H(+). The enzyme catalyses N(tele)-phospho-L-histidyl/O-phospho-L-threonyl-[pyruvate, phosphate dikinase] + phosphate + H(+) = N(tele)-phospho-L-histidyl/L-threonyl-[pyruvate, phosphate dikinase] + diphosphate. Bifunctional serine/threonine kinase and phosphorylase involved in the regulation of the pyruvate, phosphate dikinase (PPDK) by catalyzing its phosphorylation/dephosphorylation. The sequence is that of Putative pyruvate, phosphate dikinase regulatory protein from Clostridium botulinum (strain ATCC 19397 / Type A).